We begin with the raw amino-acid sequence, 240 residues long: LOB domain-containing protein 39 (240 aa).

Residues 1–107 (MSCNGCRVLR…VETVLRGGTL (107 aa)) enclose the LOB domain. The segment at 200-233 (GDRPGSPSEESVTTSCWENGMRGDNKQKRNKGEK) is disordered. The segment covering 207 to 216 (SEESVTTSCW) has biased composition (polar residues).

It belongs to the LOB domain-containing protein family. In terms of tissue distribution, expressed in young shoots, roots, stems, leaves and flowers.

The chain is LOB domain-containing protein 39 (LBD39) from Arabidopsis thaliana (Mouse-ear cress).